Consider the following 527-residue polypeptide: Cytochrome P450 monooxygenase aba2 (527 aa).

A helical membrane pass occupies residues 26-46; it reads TTVAVLVTVALIAQVLWKIFF. 3 N-linked (GlcNAc...) asparagine glycosylation sites follow: Asn189, Asn420, and Asn448. Heme is bound at residue Cys460. The N-linked (GlcNAc...) asparagine glycan is linked to Asn464.

This sequence belongs to the cytochrome P450 family. Requires heme as cofactor.

The protein resides in the membrane. The protein operates within hormone biosynthesis. Its function is as follows. Cytochrome P450 monooxygenase; part of the gene cluster that mediates the biosynthesis of abscisic acid (ABA), a phytohormone that acts antagonistically toward salicylic acid (SA), jasmonic acid (JA) and ethylene (ETH) signaling, to impede plant defense responses. The first step of the pathway catalyzes the reaction from farnesyl diphosphate to alpha-ionylideneethane performed by the alpha-ionylideneethane synthase aba3 via a three-step reaction mechanism involving 2 neutral intermediates, beta-farnesene and allofarnesene. The cytochrome P450 monooxygenase aba1 might then be involved in the conversion of alpha-ionylideneethane to alpha-ionylideneacetic acid. Alpha-ionylideneacetic acid is further converted to abscisic acid in 2 steps involving the cytochrome P450 monooxygenase aba2 and the short-chain dehydrogenase/reductase aba4, via the intermediates 1'-deoxy-ABA or 1',4'-trans-diol-ABA, depending on the order of action of these 2 enzymes. Aba2 is responsible for the hydroxylation of carbon atom C-1' and aba4 might be involved in the oxidation of the C-4' carbon atom. The chain is Cytochrome P450 monooxygenase aba2 (aba2) from Botryotinia fuckeliana (strain B05.10) (Noble rot fungus).